Reading from the N-terminus, the 552-residue chain is Phosphoglucomutase (552 aa).

Ser-143 (phosphoserine intermediate) is an active-site residue. Residues Ser-143, Asp-295, Asp-297, and Asp-299 each contribute to the Mg(2+) site.

This sequence belongs to the phosphohexose mutase family. Mg(2+) is required as a cofactor.

The catalysed reaction is alpha-D-glucose 1-phosphate = alpha-D-glucose 6-phosphate. It participates in glycolipid metabolism; diglucosyl-diacylglycerol biosynthesis. Catalyzes the interconversion between glucose-6-phosphate and alpha-glucose-1-phosphate. This is the first step in the biosynthesis of diglucosyl-diacylglycerol (Glc2-DAG), i.e. the predominant glycolipid found in the S.aureus membrane, which is also used as a membrane anchor for lipoteichoic acid (LTA). The chain is Phosphoglucomutase (pgcA) from Staphylococcus aureus (strain bovine RF122 / ET3-1).